We begin with the raw amino-acid sequence, 477 residues long: ATP synthase subunit beta (477 aa).

155–162 (GGAGVGKT) is a binding site for ATP.

This sequence belongs to the ATPase alpha/beta chains family. F-type ATPases have 2 components, CF(1) - the catalytic core - and CF(0) - the membrane proton channel. CF(1) has five subunits: alpha(3), beta(3), gamma(1), delta(1), epsilon(1). CF(0) has three main subunits: a(1), b(2) and c(9-12). The alpha and beta chains form an alternating ring which encloses part of the gamma chain. CF(1) is attached to CF(0) by a central stalk formed by the gamma and epsilon chains, while a peripheral stalk is formed by the delta and b chains.

The protein localises to the cell inner membrane. It carries out the reaction ATP + H2O + 4 H(+)(in) = ADP + phosphate + 5 H(+)(out). Produces ATP from ADP in the presence of a proton gradient across the membrane. The catalytic sites are hosted primarily by the beta subunits. This is ATP synthase subunit beta from Mesorhizobium japonicum (strain LMG 29417 / CECT 9101 / MAFF 303099) (Mesorhizobium loti (strain MAFF 303099)).